The following is a 163-amino-acid chain: Cyanate hydratase (163 aa).

Residues Arg103, Glu106, and Ser129 contribute to the active site.

The protein belongs to the cyanase family.

It catalyses the reaction cyanate + hydrogencarbonate + 3 H(+) = NH4(+) + 2 CO2. Its function is as follows. Catalyzes the reaction of cyanate with bicarbonate to produce ammonia and carbon dioxide. This chain is Cyanate hydratase, found in Ajellomyces dermatitidis (strain ER-3 / ATCC MYA-2586) (Blastomyces dermatitidis).